We begin with the raw amino-acid sequence, 541 residues long: Chaperonin GroEL (541 aa).

ATP-binding positions include 29-32 (TLGP), 86-90 (DGTTT), G413, 477-479 (DAL), and D493.

It belongs to the chaperonin (HSP60) family. In terms of assembly, forms a cylinder of 14 subunits composed of two heptameric rings stacked back-to-back. Interacts with the co-chaperonin GroES.

The protein resides in the cytoplasm. The enzyme catalyses ATP + H2O + a folded polypeptide = ADP + phosphate + an unfolded polypeptide.. Its function is as follows. Together with its co-chaperonin GroES, plays an essential role in assisting protein folding. The GroEL-GroES system forms a nano-cage that allows encapsulation of the non-native substrate proteins and provides a physical environment optimized to promote and accelerate protein folding. The sequence is that of Chaperonin GroEL from Clostridium botulinum (strain ATCC 19397 / Type A).